We begin with the raw amino-acid sequence, 256 residues long: uncharacterized protein (256 aa).

This is an uncharacterized protein from Pasteurella multocida (strain Pm70).